The chain runs to 372 residues: MSNQHILLMSNLLPVGSNISTWWNFGSMLLTCLAMQTLTGFFLAIHYTANINLAFSSVIHITRDVPYGWTMQNLHAIGASMFFICIYIHIARGIYYGSYLNKEVWLSGITLLITLMATAFFGYVLPWGQMSFWAATVITNLLTAIPYLGTTLTTWLWGGFSINDPTLTRFFALHFILPFIIISLTSIHIILLHNEGSSNPPGTNSDIDKIPFHPYHSYKDMLMVTTMITLLFLILSFSPDLLNDPENFSKANPMITPQHIKPEWYFLFAYGILRSIPNKLGGTLALLMSIAILMTTPFTHTSYTRSMTFRPLTQILFWTLVATFITLTWTATKPVESPFIIISQMTSIFYFFFFIMNPILGWTENKIMMMND.

The next 4 membrane-spanning stretches (helical) occupy residues 25–45, 69–90, 105–125, and 170–190; these read FGSM…FLAI, WTMQ…YIHI, WLSG…GYVL, and FFAL…IHII. Heme b-binding residues include His-75 and His-89. The heme b site is built by His-174 and His-188. Residue His-193 coordinates a ubiquinone. Transmembrane regions (helical) follow at residues 218–238, 280–300, 312–332, and 339–358; these read YKDM…LSFS, LGGT…PFTH, LTQI…WTAT, and FIII…IMNP.

The protein belongs to the cytochrome b family. In terms of assembly, the cytochrome bc1 complex contains 3 respiratory subunits (MT-CYB, CYC1 and UQCRFS1), 2 core proteins (UQCRC1 and UQCRC2) and probably 6 low-molecular weight proteins. Heme b serves as cofactor.

It is found in the mitochondrion inner membrane. Functionally, component of the ubiquinol-cytochrome c reductase complex (complex III or cytochrome b-c1 complex) that is part of the mitochondrial respiratory chain. The b-c1 complex mediates electron transfer from ubiquinol to cytochrome c. Contributes to the generation of a proton gradient across the mitochondrial membrane that is then used for ATP synthesis. This is Cytochrome b (MT-CYB) from Ophiophagus hannah (King cobra).